The following is a 147-amino-acid chain: Molybdopterin synthase catalytic subunit 1 (147 aa).

Residues 43–45 (NVR), 109–110 (HR), lysine 125, and 132–134 (KKE) contribute to the substrate site.

This sequence belongs to the MoaE family. As to quaternary structure, heterotetramer of 2 MoaD subunits and 2 MoaE subunits. Also stable as homodimer. The enzyme changes between these two forms during catalysis.

The catalysed reaction is 2 [molybdopterin-synthase sulfur-carrier protein]-C-terminal-Gly-aminoethanethioate + cyclic pyranopterin phosphate + H2O = molybdopterin + 2 [molybdopterin-synthase sulfur-carrier protein]-C-terminal Gly-Gly + 2 H(+). It functions in the pathway cofactor biosynthesis; molybdopterin biosynthesis. Its function is as follows. Converts molybdopterin precursor Z into molybdopterin. This requires the incorporation of two sulfur atoms into precursor Z to generate a dithiolene group. The sulfur is provided by MoaD. The sequence is that of Molybdopterin synthase catalytic subunit 1 (moaE1) from Mycobacterium tuberculosis (strain ATCC 25618 / H37Rv).